The sequence spans 414 residues: Nucleoredoxin (414 aa).

The region spanning 131 to 305 is the Thioredoxin domain; it reads LLVKDDPEGL…ELNAVQLNEG (175 aa).

This sequence belongs to the nucleoredoxin family.

The protein resides in the cytoplasm. Its subcellular location is the cytosol. It localises to the nucleus. It carries out the reaction [protein]-dithiol + NAD(+) = [protein]-disulfide + NADH + H(+). It catalyses the reaction [protein]-dithiol + NADP(+) = [protein]-disulfide + NADPH + H(+). In terms of biological role, functions as a redox-dependent negative regulator of the Wnt signaling pathway. This chain is Nucleoredoxin (nxn), found in Xenopus laevis (African clawed frog).